Consider the following 140-residue polypeptide: MEAKTAQAVAKYVRTSPRKVRQVIDLIRGKSVADAFAILKFTPVKSAADVAKVLKSAVANAEHNYEMNTADLYVQTCFVDQGPSMKRISPRAQGRADVIKKRMSHITVIVAEKPAKPAAAKKDPKAAAAKADANAGTKEG.

Residues 115–140 are disordered; the sequence is AKPAAAKKDPKAAAAKADANAGTKEG.

This sequence belongs to the universal ribosomal protein uL22 family. As to quaternary structure, part of the 50S ribosomal subunit.

Functionally, this protein binds specifically to 23S rRNA; its binding is stimulated by other ribosomal proteins, e.g. L4, L17, and L20. It is important during the early stages of 50S assembly. It makes multiple contacts with different domains of the 23S rRNA in the assembled 50S subunit and ribosome. Its function is as follows. The globular domain of the protein is located near the polypeptide exit tunnel on the outside of the subunit, while an extended beta-hairpin is found that lines the wall of the exit tunnel in the center of the 70S ribosome. The polypeptide is Large ribosomal subunit protein uL22 (Heliobacterium modesticaldum (strain ATCC 51547 / Ice1)).